A 478-amino-acid polypeptide reads, in one-letter code: Crt homolog 3 (478 aa).

The segment at 1–30 (MGSDERKPLLSINDGDDDFNHQDVSTKTPP) is disordered. At 1–52 (MGSDERKPLLSINDGDDDFNHQDVSTKTPPIKKESLSNKFKSFLKKSMTKET) the chain is on the cytoplasmic side. Residues 53 to 73 (LPILIYVLLYIISGVINVVLL) form a helical membrane-spanning segment. Residues 74–83 (KKLMIKFVNY) are Vacuolar-facing. The chain crosses the membrane as a helical span at residues 84–104 (GFFLSQITNYGYLPIFLVAMW). Residues 105-124 (YKMYCTSDVPKETRNFPQYK) are Cytoplasmic-facing. The chain crosses the membrane as a helical span at residues 125–145 (FVIMGLLDAINGFFVVIGGVS). Residues 146-149 (TSGP) lie on the Vacuolar side of the membrane. The helical transmembrane segment at 150–170 (LQQLLNQAIIPFTMIASFIFL) threads the bilayer. The Cytoplasmic segment spans residues 171 to 178 (RERYSLFQ). A helical transmembrane segment spans residues 179-199 (LGGAAVILGGVIVSLIPSLVG). Residues 200-205 (GSSGGN) are Vacuolar-facing. Residues 206 to 226 (ILFYNFFYLISVIPGALSNVY) form a helical membrane-spanning segment. Residues 227–237 (KDIAFQSIDMD) lie on the Cytoplasmic side of the membrane. Residues 238 to 258 (VWYLQFWDCLYQSLFGSILFP) form a helical membrane-spanning segment. Over 259 to 322 (VNNWLPPPAT…FVCDDCHNTW (64 aa)) the chain is Vacuolar. N-linked (GlcNAc...) asparagine glycosylation is present at Asn296. The helical transmembrane segment at 323 to 343 (IIVLIYMTVNIAYNIFILLVL) threads the bilayer. Topologically, residues 344–352 (KHAGATVYS) are cytoplasmic. Residues 353-373 (IANTVILPLTNIFFSIHFIMG) form a helical membrane-spanning segment. Over 374-376 (AAT) the chain is Vacuolar. A helical membrane pass occupies residues 377–397 (TPFSALSVAGLLLILFGLGGY). Residues 398-478 (RIGSMIKKPP…RYRATNIINN (81 aa)) lie on the Cytoplasmic side of the membrane. A disordered region spans residues 404–446 (KKPPPDSKKDSEQQGGEGGAGDGDSSDNKNNLGDSAEIPQQIQ). A compositionally biased stretch (basic and acidic residues) spans 406–415 (PPPDSKKDSE).

It belongs to the CRT-like transporter family.

It is found in the vacuole membrane. Functionally, nutrient transporter. Involved in maintaining the osmotic homeostasis of the digestive vacuole. In Dictyostelium discoideum (Social amoeba), this protein is Crt homolog 3 (crtp3).